The primary structure comprises 463 residues: GTPase Der (463 aa).

The disordered stretch occupies residues 1 to 20; the sequence is MDEGDEDLISGRGFTEGARK. EngA-type G domains follow at residues 27–190 and 202–375; these read GVLA…KQAE and RRVA…ESWD. GTP-binding positions include 33 to 40, 80 to 84, 142 to 145, 208 to 215, 255 to 259, and 320 to 323; these read GRPNVGKS, DTGGW, NKID, DTAGI, and NKWD. In terms of domain architecture, KH-like spans 376–458; sequence QRIPTGKLNA…PIQISVNIRE (83 aa).

Belongs to the TRAFAC class TrmE-Era-EngA-EngB-Septin-like GTPase superfamily. EngA (Der) GTPase family. As to quaternary structure, associates with the 50S ribosomal subunit.

GTPase that plays an essential role in the late steps of ribosome biogenesis. This chain is GTPase Der, found in Bifidobacterium longum (strain NCC 2705).